The sequence spans 277 residues: Exosome complex component Rrp42 (277 aa).

Belongs to the RNase PH family. Rrp42 subfamily. Component of the archaeal exosome complex. Forms a hexameric ring-like arrangement composed of 3 Rrp41-Rrp42 heterodimers. The hexameric ring associates with a trimer of Rrp4 and/or Csl4 subunits.

The protein localises to the cytoplasm. Functionally, non-catalytic component of the exosome, which is a complex involved in RNA degradation. Contributes to the structuring of the Rrp41 active site. This is Exosome complex component Rrp42 from Pyrococcus furiosus (strain ATCC 43587 / DSM 3638 / JCM 8422 / Vc1).